The primary structure comprises 291 residues: Acetyl-coenzyme A carboxylase carboxyl transferase subunit beta (291 aa).

The CoA carboxyltransferase N-terminal domain occupies 23 to 291 (VWHKCPSCTA…PPDLPVEESV (269 aa)). Zn(2+)-binding residues include Cys-27, Cys-30, Cys-46, and Cys-49. Residues 27–49 (CPSCTAVLYRVELERNLEVCPKC) form a C4-type zinc finger.

This sequence belongs to the AccD/PCCB family. Acetyl-CoA carboxylase is a heterohexamer composed of biotin carboxyl carrier protein (AccB), biotin carboxylase (AccC) and two subunits each of ACCase subunit alpha (AccA) and ACCase subunit beta (AccD). Requires Zn(2+) as cofactor.

It localises to the cytoplasm. The catalysed reaction is N(6)-carboxybiotinyl-L-lysyl-[protein] + acetyl-CoA = N(6)-biotinyl-L-lysyl-[protein] + malonyl-CoA. The protein operates within lipid metabolism; malonyl-CoA biosynthesis; malonyl-CoA from acetyl-CoA: step 1/1. In terms of biological role, component of the acetyl coenzyme A carboxylase (ACC) complex. Biotin carboxylase (BC) catalyzes the carboxylation of biotin on its carrier protein (BCCP) and then the CO(2) group is transferred by the transcarboxylase to acetyl-CoA to form malonyl-CoA. The sequence is that of Acetyl-coenzyme A carboxylase carboxyl transferase subunit beta from Coxiella burnetii (strain Dugway 5J108-111).